Reading from the N-terminus, the 263-residue chain is Benzil reductase ((S)-benzoin forming) IRC24 (263 aa).

NADP(+) contacts are provided by I7 and N86. S143 acts as the Proton donor in catalysis. Y157, K161, V190, and T192 together coordinate NADP(+). Y157 acts as the Proton acceptor in catalysis. K161 (lowers pKa of active site Tyr) is an active-site residue.

This sequence belongs to the short-chain dehydrogenases/reductases (SDR) family.

The catalysed reaction is (S)-benzoin + NADP(+) = benzil + NADPH + H(+). It carries out the reaction 2-hydroxy-1-phenyl-1-propanone + NADP(+) = 1-phenyl-1,2-propanedione + NADPH + H(+). In terms of biological role, reduces benzil stereospecifically to (S)-benzoin. Also reduces 1-phenyl-1,2-propanedione to 2-hydroxy-1-phenyl-1-propanone. Is probably involved in a pathway contributing to genomic integrity. The sequence is that of Benzil reductase ((S)-benzoin forming) IRC24 (IRC24) from Saccharomyces cerevisiae (strain ATCC 204508 / S288c) (Baker's yeast).